The following is a 151-amino-acid chain: MKTLEKYILFAIVLCCLLQLGQAIKCWDCRSDNDPKCGDPFDNSTLAITDCQQAPELEHLKGVRPTMCRKIRQKVHGEWRYFRSCAYMGEPGIEGDERFCLMRTGSYNIFMEFCTCNSKDGCNSAGIHRLGLMGVLTGTLLSVIVAHLLRQ.

The N-terminal stretch at 1–23 is a signal peptide; the sequence is MKTLEKYILFAIVLCCLLQLGQA. Topologically, residues 24–128 are lumenal; it reads IKCWDCRSDN…KDGCNSAGIH (105 aa). 5 disulfide bridges follow: cysteine 26-cysteine 68, cysteine 29-cysteine 37, cysteine 51-cysteine 85, cysteine 100-cysteine 114, and cysteine 116-cysteine 122. Asparagine 43 is a glycosylation site (N-linked (GlcNAc...) asparagine). Serine 124 carries the GPI-anchor amidated serine lipid modification. A propeptide spans 125-151 (removed in mature form); sequence AGIHRLGLMGVLTGTLLSVIVAHLLRQ. A helical membrane pass occupies residues 129 to 149; it reads RLGLMGVLTGTLLSVIVAHLL. The Cytoplasmic segment spans residues 150 to 151; the sequence is RQ.

Belongs to the quiver family.

It localises to the vesicle. Its subcellular location is the membrane. It is found in the endomembrane system. Required for septate junction assembly, possibly by organizing the preassembly and transport of septate junction proteins including dlg1/disks large 1 and Nrx-IV/Neurexin-IV. Involved in paracellular barrier functions of trachea, hindgut and salivary gland mediated by epithelial cell septate junctions. The sequence is that of UPAR/Ly6 domain-containing protein crok from Drosophila melanogaster (Fruit fly).